The chain runs to 369 residues: 3 beta-hydroxysteroid dehydrogenase type 7 (369 aa).

The active-site Proton acceptor is the Tyr-159. Residue Lys-163 coordinates NAD(+). The next 2 helical transmembrane spans lie at Leu-289–Leu-309 and Pro-311–Phe-331.

It belongs to the 3-beta-HSD family.

The protein localises to the endoplasmic reticulum membrane. It carries out the reaction 7alpha-hydroxycholesterol + NAD(+) = 7alpha-hydroxycholest-4-en-3-one + NADH + H(+). It catalyses the reaction 7alpha,25-dihydroxycholesterol + NAD(+) = 7alpha,25-dihydroxy-4-cholesten-3-one + NADH + H(+). The enzyme catalyses (25R)-cholest-5-en-3beta,7alpha,26-triol + NAD(+) = (25R)-7alpha,26-dihydroxycholest-4-en-3-one + NADH + H(+). The catalysed reaction is (24S)-7alpha-dihydroxycholesterol + NAD(+) = (24S)-7alpha,24-dihydroxycholest-4-en-3-one + NADH + H(+). It functions in the pathway lipid metabolism; steroid biosynthesis. Its function is as follows. The 3-beta-HSD enzymatic system plays a crucial role in the biosynthesis of all classes of hormonal steroids. HSD VII is active against four 7-alpha-hydroxylated sterols. Does not metabolize several different C(19/21) steroids as substrates. Involved in bile acid synthesis. Plays a key role in cell positioning and movement in lymphoid tissues by mediating degradation of 7-alpha,25-dihydroxycholesterol (7-alpha,25-OHC): 7-alpha,25-OHC acts as a ligand for the G protein-coupled receptor GPR183/EBI2, a chemotactic receptor for a number of lymphoid cells. This is 3 beta-hydroxysteroid dehydrogenase type 7 from Homo sapiens (Human).